Reading from the N-terminus, the 659-residue chain is Macrolide export ATP-binding/permease protein MacB (659 aa).

Positions 10-249 constitute an ABC transporter domain; it reads IELRGIRKRY…QPLLHHAGLS (240 aa). ATP is bound at residue 47-54; it reads GSSGSGKS. The next 4 helical transmembrane spans lie at 287–307, 538–558, 594–614, and 619–639; these read SLTL…LAIG, LGLV…NVML, ITGG…LVFW, and VFSF…GLIF.

Belongs to the ABC transporter superfamily. Macrolide exporter (TC 3.A.1.122) family. Homodimer.

It is found in the cell inner membrane. Its function is as follows. Non-canonical ABC transporter that contains transmembrane domains (TMD), which form a pore in the inner membrane, and an ATP-binding domain (NBD), which is responsible for energy generation. Confers resistance against macrolides. The polypeptide is Macrolide export ATP-binding/permease protein MacB (Nitrosomonas europaea (strain ATCC 19718 / CIP 103999 / KCTC 2705 / NBRC 14298)).